The following is a 742-amino-acid chain: MNEVQLEVAKAYPNDSGRGIARLDPDTLLHLKLSPGDIIEIEGAETTAAKVWRADRQDWNTDTIRIDGFTRQNAEVGIGERVKIRKADAEKADTLVLAPPEEASVQFGSDAAGMVKRQILKRPVVARDIVPVMSSTNHPFMRSPGQAIPLIAVETEPEGVCLVTEDTDVELREEPISGFERTGGGITYEDIGGLENEIQRVREMVELPMKHPQIFQKLGIEPPQGVLLHGPPGTGKTLLAKAVANETSASFFSIAGPEIISKYYGESEQQLREIFEDAKDDSPSIIFIDELDSIAPKREDVTGEVERRVVAQLLTMMDGLEGRGQVIVIAATNRVDAVDPALRRPGRFDREIEIGVPDEIGREEILKIHTRGMPLSDDVNLSTLADDTHGFVGADIESLSKEAAMRALRRYLPEIDLDEEDIPPSLIDRMIVKREDFKGALSEVEPSAMREVLVELPKITWDDVGGLTEAKNNVKESVEWPLNQPEKFTRMGVEPPAGVLLYGPPGTGKTLMAKAVANETNANFISVRGPQLLSKWVGESEKAIRQTFRKARQVAPTVIFFDELDSLAPGRGQTGGNNVSERVVNQLLTELDGLEEMEEVMVIAATNRPDIIDPALIRSGRFDRLVQVGQPGIEGREQILKIHTQDTPLAADVSLRELAERADGYVGSDLANIAREAAIEALRDDEDADDVGMAHFRAAMENVRPTITDDLMEYYDQVEDQFKGSQGPNVNSRQGSEHIGFQ.

ATP is bound by residues G230–T237 and G503–T510. Residues F722 to Q742 are disordered. The segment covering K723–Q734 has biased composition (polar residues).

The protein belongs to the AAA ATPase family. CDC48 subfamily.

In terms of biological role, may be part of a transduction pathway connecting light to cell division. The polypeptide is Protein CdcH (cdcH) (Halobacterium salinarum (strain ATCC 700922 / JCM 11081 / NRC-1) (Halobacterium halobium)).